Here is a 115-residue protein sequence, read N- to C-terminus: Large ribosomal subunit protein bL31B (115 aa).

Belongs to the bacterial ribosomal protein bL31 family. Type B subfamily. In terms of assembly, part of the 50S ribosomal subunit.

The protein is Large ribosomal subunit protein bL31B of Polynucleobacter asymbioticus (strain DSM 18221 / CIP 109841 / QLW-P1DMWA-1) (Polynucleobacter necessarius subsp. asymbioticus).